Reading from the N-terminus, the 663-residue chain is MTGARASAAEQRRAGRSGQARAAERAAGMSGAGRALAALLLAASVLSAALLAPGGSSGRDAQAAPPRDLDKKRHAELKMDQALLLIHNELLWTNLTVYWKSECCYHCLFQVLVNVPQSPKAGKPSAAAASVSTQHGSILQLNDTLEEKEVCRLEYRFGEFGNYSLLVKNIHNGVSEIACDLAVNEDPVDSNLPVSIAFLIGLAVIIVISFLRLLLSLDDFNNWISKAISSRETDRLINSELGSPSRTDPLDGDVQPATWRLSALPPRLRSVDTFRGIALILMVFVNYGGGKYWYFKHASWNGLTVADLVFPWFVFIMGSSIFLSMTSILQRGCSKFRLLGKIAWRSFLLICIGIIIVNPNYCLGPLSWDKVRIPGVLQRLGVTYFVVAVLELLFAKPVPEHCASERSCLSLRDITSSWPQWLLILVLEGLWLGLTFLLPVPGCPTGYLGPGGIGDFGKYPNCTGGAAGYIDRLLLGDDHLYQHPSSAVLYHTEVAYDPEGILGTINSIVMAFLGVQAGKILLYYKARTKDILIRFTAWCCILGLISVALTKVSENEGFIPVNKNLWSLSYVTTLSSFAFFILLVLYPVVDVKGLWTGTPFFYPGMNSILVYVGHEVFENYFPFQWKLKDNQSHKEHLTQNIVATALWVLIAYILYRKKIFWKI.

Positions 1-24 (MTGARASAAEQRRAGRSGQARAAE) are disordered. At 1 to 190 (MTGARASAAE…LAVNEDPVDS (190 aa)) the chain is on the lumenal, vesicle side. Asn94, Asn142, and Asn162 each carry an N-linked (GlcNAc...) asparagine glycan. Cys151 and Cys462 are joined by a disulfide. A helical transmembrane segment spans residues 191 to 211 (NLPVSIAFLIGLAVIIVISFL). Over 212–275 (RLLLSLDDFN…PRLRSVDTFR (64 aa)) the chain is Cytoplasmic. A phosphoserine mark is found at Ser243 and Ser245. The chain crosses the membrane as a helical span at residues 276-296 (GIALILMVFVNYGGGKYWYFK). His297 is a catalytic residue. The Lumenal, vesicle segment spans residues 297 to 302 (HASWNG). A helical membrane pass occupies residues 303 to 323 (LTVADLVFPWFVFIMGSSIFL). Residues 324–345 (SMTSILQRGCSKFRLLGKIAWR) lie on the Cytoplasmic side of the membrane. A helical membrane pass occupies residues 346–366 (SFLLICIGIIIVNPNYCLGPL). Residues 367 to 374 (SWDKVRIP) are Lumenal, vesicle-facing. A helical transmembrane segment spans residues 375–395 (GVLQRLGVTYFVVAVLELLFA). The Cytoplasmic segment spans residues 396–420 (KPVPEHCASERSCLSLRDITSSWPQ). Residues 421 to 441 (WLLILVLEGLWLGLTFLLPVP) form a helical membrane-spanning segment. Residues 442–500 (GCPTGYLGPGGIGDFGKYPNCTGGAAGYIDRLLLGDDHLYQHPSSAVLYHTEVAYDPEG) are Lumenal, vesicle-facing. A helical transmembrane segment spans residues 501–521 (ILGTINSIVMAFLGVQAGKIL). The Cytoplasmic segment spans residues 522 to 529 (LYYKARTK). The chain crosses the membrane as a helical span at residues 530-550 (DILIRFTAWCCILGLISVALT). At 551-564 (KVSENEGFIPVNKN) the chain is on the lumenal, vesicle side. A helical transmembrane segment spans residues 565-585 (LWSLSYVTTLSSFAFFILLVL). Residues 586 to 592 (YPVVDVK) lie on the Cytoplasmic side of the membrane. A helical membrane pass occupies residues 593–613 (GLWTGTPFFYPGMNSILVYVG). Residues 614–634 (HEVFENYFPFQWKLKDNQSHK) are Lumenal, vesicle-facing. A lysosomal targeting region region spans residues 624–635 (QWKLKDNQSHKE). Residues 635–655 (EHLTQNIVATALWVLIAYILY) form a helical membrane-spanning segment. The Cytoplasmic segment spans residues 656-663 (RKKIFWKI).

As to quaternary structure, homooligomer. Homooligomerization is necessary for enzyme activity. In terms of processing, undergoes intralysosomal proteolytic cleavage; occurs within the end of the first and/or the beginning of the second luminal domain and is essential for the activation of the enzyme. Glycosylated. Widely expressed, with highest level in leukocytes, heart, liver, skeletal muscle, lung, placenta and liver.

It localises to the lysosome membrane. The catalysed reaction is alpha-D-glucosaminyl-[heparan sulfate](n) + acetyl-CoA = N-acetyl-alpha-D-glucosaminyl-[heparan sulfate](n) + CoA + H(+). Lysosomal acetyltransferase that acetylates the non-reducing terminal alpha-glucosamine residue of intralysosomal heparin or heparan sulfate, converting it into a substrate for luminal alpha-N-acetyl glucosaminidase. The protein is Heparan-alpha-glucosaminide N-acetyltransferase (HGSNAT) of Homo sapiens (Human).